Reading from the N-terminus, the 159-residue chain is U1 small nuclear ribonucleoprotein C (159 aa).

Residues 4–36 form a Matrin-type zinc finger; the sequence is FYCDYCDTYLTHDSPSVRKTHCSGRKHKENVKD. Position 8 is a phosphotyrosine (Tyr8). Ser17 bears the Phosphoserine mark. An N6-acetyllysine modification is found at Lys52. The interval 62-96 is disordered; the sequence is IPPAPFSAPPPAGAMIPPPPSLPGPPRPGMMPAPH. Residues 63 to 92 show a composition bias toward pro residues; the sequence is PPAPFSAPPPAGAMIPPPPSLPGPPRPGMM.

This sequence belongs to the U1 small nuclear ribonucleoprotein C family. In terms of assembly, component of the U1 snRNP. The U1 snRNP is composed of the U1 snRNA and the 7 core Sm proteins SNRPB, SNRPD1, SNRPD2, SNRPD3, SNRPE, SNRPF and SNRPG that assemble in a heptameric protein ring on the Sm site of the small nuclear RNA to form the core snRNP, and at least 3 U1 snRNP-specific proteins SNRNP70/U1-70K, SNRPA/U1-A and SNRPC/U1-C. SNRPC/U1-C interacts with U1 snRNA and the 5' splice-site region of the pre-mRNA. Interacts (via N-terminus) with TIA1 (via C-terminus); thereby promoting spliceosomal U1 snRNP recruitment to 5' splice sites.

Its subcellular location is the nucleus. Component of the spliceosomal U1 snRNP, which is essential for recognition of the pre-mRNA 5' splice-site and the subsequent assembly of the spliceosome. SNRPC/U1-C is directly involved in initial 5' splice-site recognition for both constitutive and regulated alternative splicing. The interaction with the 5' splice-site seems to precede base-pairing between the pre-mRNA and the U1 snRNA. Stimulates commitment or early (E) complex formation by stabilizing the base pairing of the 5' end of the U1 snRNA and the 5' splice-site region. The sequence is that of U1 small nuclear ribonucleoprotein C from Rattus norvegicus (Rat).